Consider the following 115-residue polypeptide: Phosphoribosyl-AMP cyclohydrolase (115 aa).

Asp-80 is a binding site for Mg(2+). Cys-81 is a binding site for Zn(2+). 2 residues coordinate Mg(2+): Asp-82 and Asp-84. Zn(2+) contacts are provided by Cys-97 and Cys-104.

Belongs to the PRA-CH family. Homodimer. Mg(2+) serves as cofactor. Zn(2+) is required as a cofactor.

It localises to the cytoplasm. It catalyses the reaction 1-(5-phospho-beta-D-ribosyl)-5'-AMP + H2O = 1-(5-phospho-beta-D-ribosyl)-5-[(5-phospho-beta-D-ribosylamino)methylideneamino]imidazole-4-carboxamide. The protein operates within amino-acid biosynthesis; L-histidine biosynthesis; L-histidine from 5-phospho-alpha-D-ribose 1-diphosphate: step 3/9. Functionally, catalyzes the hydrolysis of the adenine ring of phosphoribosyl-AMP. In Mycobacterium bovis (strain ATCC BAA-935 / AF2122/97), this protein is Phosphoribosyl-AMP cyclohydrolase.